The primary structure comprises 96 residues: Large ribosomal subunit protein eL14 (96 aa).

Belongs to the eukaryotic ribosomal protein eL14 family.

In Sulfolobus acidocaldarius (strain ATCC 33909 / DSM 639 / JCM 8929 / NBRC 15157 / NCIMB 11770), this protein is Large ribosomal subunit protein eL14.